A 767-amino-acid chain; its full sequence is Two-component response regulator-like PRR73 (767 aa).

Residues 1-64 (MGSACEAGTD…EPQQTDEQKE (64 aa)) form a disordered region. In terms of domain architecture, Response regulatory spans 82 to 200 (RVLLVENDDS…ELKNLWQHVW (119 aa)). The segment covering 205–214 (SSSGSGSESG) has biased composition (low complexity). Disordered stretches follow at residues 205–272 (SSSG…QSSW), 312–388 (RWLP…NEPT), 476–546 (ASNQ…RGKV), 646–701 (ANYS…SGSG), and 727–767 (NFGK…DEDR). Residues 238–252 (DNEDDDDNDEDDDDL) show a composition bias toward acidic residues. 3 stretches are compositionally biased toward polar residues: residues 263–272 (DNGSGTQSSW), 343–361 (RNSS…VNPT), and 488–497 (CSPQDNSSEA). The span at 518-531 (GSNGSSNNNDMGSS) shows a compositional bias: low complexity. Over residues 532–543 (TKNAITKPSSNR) the composition is skewed to polar residues. The segment covering 689 to 700 (GAGGGNGSGSGS) has biased composition (gly residues). Residues 712-754 (REAALNKFRQKRKVRNFGKKVRYQSRKRLAEQRPRIRGQFVRQ) form the CCT domain. Basic residues predominate over residues 727-738 (NFGKKVRYQSRK).

It belongs to the ARR-like family.

It is found in the nucleus. Functionally, controls photoperiodic flowering response. Seems to be one of the component of the circadian clock. Expression of several members of the ARR-like family is controlled by circadian rhythm. The particular coordinated sequential expression of PRR73, PRR37, PRR95, PRR59 and PPR1 result to circadian waves that may be at the basis of the endogenous circadian clock. This chain is Two-component response regulator-like PRR73 (PRR73), found in Oryza sativa subsp. japonica (Rice).